We begin with the raw amino-acid sequence, 293 residues long: MPWIQLKLNTTGANAEDLSDALMEAGAVSITFQDTHDTPVFEPLPGETRLWGDTDVIGLFDAETDMKEVVAILENHPLLGAGFAHKIEQLEDKDWEREWMDNFHPMRFGERLWICPSWRDVPDENAVNVMLDPGLAFGTGTHPTTSLCLQWLDSLDLTGKTVIDFGCGSGILAIAALKLGAAKAIGIDIDPQAIQASRDNAERNGVSDRLELYLPKDQPEEMKADVVVANILAGPLRELAPLISVLPVSGGLLGLSGILASQAESVCEAYADSFALDPVVEKEEWCRITGRKN.

Positions 145, 166, 188, and 230 each coordinate S-adenosyl-L-methionine.

Belongs to the methyltransferase superfamily. PrmA family.

It localises to the cytoplasm. It carries out the reaction L-lysyl-[protein] + 3 S-adenosyl-L-methionine = N(6),N(6),N(6)-trimethyl-L-lysyl-[protein] + 3 S-adenosyl-L-homocysteine + 3 H(+). In terms of biological role, methylates ribosomal protein L11. The protein is Ribosomal protein L11 methyltransferase of Escherichia coli O7:K1 (strain IAI39 / ExPEC).